Reading from the N-terminus, the 354-residue chain is Methylthioribose-1-phosphate isomerase (354 aa).

Residues 49-51, R92, and Q199 contribute to the substrate site; that span reads RGA. Residue D240 is the Proton donor of the active site. 250–251 serves as a coordination point for substrate; the sequence is NK.

This sequence belongs to the eIF-2B alpha/beta/delta subunits family. MtnA subfamily.

It catalyses the reaction 5-(methylsulfanyl)-alpha-D-ribose 1-phosphate = 5-(methylsulfanyl)-D-ribulose 1-phosphate. The protein operates within amino-acid biosynthesis; L-methionine biosynthesis via salvage pathway; L-methionine from S-methyl-5-thio-alpha-D-ribose 1-phosphate: step 1/6. In terms of biological role, catalyzes the interconversion of methylthioribose-1-phosphate (MTR-1-P) into methylthioribulose-1-phosphate (MTRu-1-P). This chain is Methylthioribose-1-phosphate isomerase, found in Koribacter versatilis (strain Ellin345).